The chain runs to 104 residues: Large ribosomal subunit protein uL24 (104 aa).

It belongs to the universal ribosomal protein uL24 family. Part of the 50S ribosomal subunit.

In terms of biological role, one of two assembly initiator proteins, it binds directly to the 5'-end of the 23S rRNA, where it nucleates assembly of the 50S subunit. One of the proteins that surrounds the polypeptide exit tunnel on the outside of the subunit. The protein is Large ribosomal subunit protein uL24 of Mesorhizobium japonicum (strain LMG 29417 / CECT 9101 / MAFF 303099) (Mesorhizobium loti (strain MAFF 303099)).